The chain runs to 204 residues: Protein-L-isoaspartate O-methyltransferase (204 aa).

It belongs to the methyltransferase superfamily. L-isoaspartyl/D-aspartyl protein methyltransferase family. As to quaternary structure, monomer.

It localises to the cytoplasm. The catalysed reaction is [protein]-L-isoaspartate + S-adenosyl-L-methionine = [protein]-L-isoaspartate alpha-methyl ester + S-adenosyl-L-homocysteine. Its function is as follows. Catalyzes the methyl esterification of L-isoaspartyl residues in peptides and proteins that result from spontaneous decomposition of normal L-aspartyl and L-asparaginyl residues. It plays a role in the repair and/or degradation of damaged proteins. This chain is Protein-L-isoaspartate O-methyltransferase (pcm), found in Rhizobium meliloti (strain 1021) (Ensifer meliloti).